The chain runs to 315 residues: Methionyl-tRNA formyltransferase (315 aa).

Position 113-116 (113-116) interacts with (6S)-5,6,7,8-tetrahydrofolate; it reads SLLP.

This sequence belongs to the Fmt family.

The enzyme catalyses L-methionyl-tRNA(fMet) + (6R)-10-formyltetrahydrofolate = N-formyl-L-methionyl-tRNA(fMet) + (6S)-5,6,7,8-tetrahydrofolate + H(+). In terms of biological role, attaches a formyl group to the free amino group of methionyl-tRNA(fMet). The formyl group appears to play a dual role in the initiator identity of N-formylmethionyl-tRNA by promoting its recognition by IF2 and preventing the misappropriation of this tRNA by the elongation apparatus. This Escherichia coli (strain SE11) protein is Methionyl-tRNA formyltransferase.